The following is a 352-amino-acid chain: tRNA (guanine-N(1)-)-methyltransferase (352 aa).

S-adenosyl-L-methionine is bound by residues glycine 109 and 129-134 (IGDYVL).

The protein belongs to the RNA methyltransferase TrmD family. Homodimer.

The protein localises to the cytoplasm. The enzyme catalyses guanosine(37) in tRNA + S-adenosyl-L-methionine = N(1)-methylguanosine(37) in tRNA + S-adenosyl-L-homocysteine + H(+). Its function is as follows. Specifically methylates guanosine-37 in various tRNAs. The sequence is that of tRNA (guanine-N(1)-)-methyltransferase from Chlamydia trachomatis serovar L2 (strain ATCC VR-902B / DSM 19102 / 434/Bu).